A 438-amino-acid chain; its full sequence is GTPase Der (438 aa).

2 EngA-type G domains span residues proline 4–serine 168 and isoleucine 177–serine 352. Residues glycine 10–serine 17, aspartate 57–isoleucine 61, asparagine 120–aspartate 123, glycine 183–serine 190, aspartate 230–leucine 234, and asparagine 295–aspartate 298 each bind GTP. One can recognise a KH-like domain in the interval lysine 353 to lysine 437.

Belongs to the TRAFAC class TrmE-Era-EngA-EngB-Septin-like GTPase superfamily. EngA (Der) GTPase family. In terms of assembly, associates with the 50S ribosomal subunit.

Its function is as follows. GTPase that plays an essential role in the late steps of ribosome biogenesis. This Clostridium perfringens (strain ATCC 13124 / DSM 756 / JCM 1290 / NCIMB 6125 / NCTC 8237 / Type A) protein is GTPase Der.